The following is a 64-amino-acid chain: Drosocin antimicrobial peptides (64 aa).

Residues 1-19 (MKFTIVFLLLACVFAMAVA) form the signal peptide. The propeptide occupies 20–21 (TP). An O-linked (GalNAc...) serine glycan is attached at S28. O-linked (GalNAc...) threonine glycosylation is present at T32. A critical for inhibition of translation, possibly due to its role in mediating interactions with bacterial 23S rRNA and peptide chain release factors region spans residues 32-40 (TSHPRPIRV).

The protein belongs to the drosocin family. In terms of assembly, associates with the bacterial 50S ribosomal complex, occupying the nascent peptide exit tunnel. Interacts with bacterial 23S rRNA; this interaction is direct. Interacts with bacterial rplV/50S ribosomal protein L22; this interaction is direct. Interacts with bacterial prfA/peptide chain release factor RF1; while associated with the bacterial 50S ribosomal complex, this interaction is direct and traps RF1 on the ribosome, inhibiting further translation. Post-translationally, proteolytically cleaved at a pair of basic residues corresponding to the RXK/RR optimal cleavage site for furin proteases to produce two distinct antibacterial peptides. O-glycosylated. O-glycosylation may be required for efficient uptake by target bacterial cells. Monosaccharide modification of Thr-32 provides better antibacterial activity than disaccharide modification or no modification. O-glycosylation of Thr-32 is not essential for antimicrobial activity but enhances this activity by mediating interactions with the 23S rRNA and increasing the efficiency of translation inhibition.

The protein resides in the secreted. Its function is as follows. Antibacterial peptide with strong anti-Gram-negative bacteria activity. Significantly contributes to antibacterial activity against Enterobacter cloacae but not Providencia burhodogranariea. Inhibitor of bacterial translation machinery that targets translation termination in a prfA- or prfB-dependent manner. Binds within the nascent peptide exit tunnel of the bacterial large ribosomal subunit, potentially interfering with nascent chain translocation that occurs post-peptide bond formation. Binds prfA/RF1 (and potentially prfB/RF2), trapping it on the ribosome after release of the nascent polypeptide chain and preventing further translation. The resulting depletion of peptide chain release factors further disrupts bacterial translation by preventing ribosomal peptide chain release and inducing stop codon readthrough. Entry into target Escherichia coli cells requires the bacterial peptide antibiotic transporter sbmA. In terms of biological role, peptide with significant antibacterial activity against Providencia burhodogranariea but not Enterobacter cloacae. The chain is Drosocin antimicrobial peptides (Dro) from Drosophila simulans (Fruit fly).